The sequence spans 394 residues: Isopentenyl-diphosphate delta-isomerase (394 aa).

Substrate is bound at residue 10 to 11; sequence RK. Residues Thr-67, 68–70, Ser-101, and Asn-129 each bind FMN; that span reads GMT. Residue 101–103 participates in substrate binding; sequence SQR. Gln-168 serves as a coordination point for substrate. Glu-169 provides a ligand contact to Mg(2+). Residues Lys-200, Ser-225, Thr-230, 279–281, and 300–301 contribute to the FMN site; these read GMR and AL.

This sequence belongs to the IPP isomerase type 2 family. Homooctamer. Dimer of tetramers. The cofactor is FMN. NADPH is required as a cofactor. Mg(2+) serves as cofactor.

The protein resides in the cytoplasm. It catalyses the reaction isopentenyl diphosphate = dimethylallyl diphosphate. Its function is as follows. Involved in the biosynthesis of isoprenoids. Catalyzes the 1,3-allylic rearrangement of the homoallylic substrate isopentenyl (IPP) to its allylic isomer, dimethylallyl diphosphate (DMAPP). This chain is Isopentenyl-diphosphate delta-isomerase, found in Pyrococcus furiosus (strain ATCC 43587 / DSM 3638 / JCM 8422 / Vc1).